The sequence spans 241 residues: Xyloglucan-specific endo-beta-1,4-glucanase 1 (241 aa).

The N-terminal stretch at 1 to 19 is a signal peptide; it reads MKGLLAGTIAAATFAVASA. Glu-136 is an active-site residue. Residues Asn-174 and Asn-190 are each glycosylated (N-linked (GlcNAc...) asparagine). Glu-222 is a catalytic residue.

Belongs to the glycosyl hydrolase 12 (cellulase H) family. In terms of assembly, interacts with host apoplastic glucanase inhibitor GIP2.

It carries out the reaction xyloglucan + H2O = xyloglucan oligosaccharides.. Its activity is regulated as follows. The xyloglucanase activity is inhibited by the binding of the host apoplastic glucanase inhibitor GIP2. Functionally, glycoside hydrolase that exhibits xyloglucanase activity. Acts as an important virulence factor during P.parasitica infection of its host Nicotiana benthamiana. Also acts as a pathogen-associated molecular pattern (PAMP) in host species, where it can trigger defense responses including cell death. The PAMP activity is independent of its xyloglucanase activity. With paralog XLP1, is required to elevate apoplastic sugar during P.parasitica infection. This Phytophthora nicotianae (strain INRA-310) (Phytophthora parasitica) protein is Xyloglucan-specific endo-beta-1,4-glucanase 1.